Here is a 257-residue protein sequence, read N- to C-terminus: NAD-capped RNA hydrolase NudC (257 aa).

A substrate-binding site is contributed by Arg69. Zn(2+)-binding residues include Cys98 and Cys101. Glu111 lines the substrate pocket. Positions 116 and 119 each coordinate Zn(2+). Tyr124 contributes to the substrate binding site. Residues 125–248 (PQIAPCIIVA…TVARRLIEDT (124 aa)) form the Nudix hydrolase domain. Residues Ala158, Glu174, and Glu178 each coordinate a divalent metal cation. Residues 159–180 (GFVEVGETLEQAVAREVMEESG) carry the Nudix box motif. 192 to 199 (QPWPFPQS) contributes to the substrate binding site. Glu219 contributes to the a divalent metal cation binding site. Residue Ala241 coordinates substrate.

Belongs to the Nudix hydrolase family. NudC subfamily. Homodimer. It depends on Mg(2+) as a cofactor. The cofactor is Mn(2+). Requires Zn(2+) as cofactor.

It catalyses the reaction a 5'-end NAD(+)-phospho-ribonucleoside in mRNA + H2O = a 5'-end phospho-adenosine-phospho-ribonucleoside in mRNA + beta-nicotinamide D-ribonucleotide + 2 H(+). It carries out the reaction NAD(+) + H2O = beta-nicotinamide D-ribonucleotide + AMP + 2 H(+). The enzyme catalyses NADH + H2O = reduced beta-nicotinamide D-ribonucleotide + AMP + 2 H(+). In terms of biological role, mRNA decapping enzyme that specifically removes the nicotinamide adenine dinucleotide (NAD) cap from a subset of mRNAs by hydrolyzing the diphosphate linkage to produce nicotinamide mononucleotide (NMN) and 5' monophosphate mRNA. The NAD-cap is present at the 5'-end of some mRNAs and stabilizes RNA against 5'-processing. Has preference for mRNAs with a 5'-end purine. Catalyzes the hydrolysis of a broad range of dinucleotide pyrophosphates. This Klebsiella pneumoniae subsp. pneumoniae (strain ATCC 700721 / MGH 78578) protein is NAD-capped RNA hydrolase NudC.